Reading from the N-terminus, the 71-residue chain is Prokaryotic ubiquitin-like protein Pup (71 aa).

Residues 1-30 (MPSASGHHQIPAETQRHDDDQTQETAQGLS) form a disordered region. The stretch at 23–56 (QETAQGLSAAAMLAQEQADDLDAILDDIETVLET) forms a coiled coil. Positions 27 to 65 (QGLSAAAMLAQEQADDLDAILDDIETVLETNAEEYVSSF) are ARC ATPase binding. An Isoglutamyl lysine isopeptide (Glu-Lys) (interchain with K-? in acceptor proteins) cross-link involves residue E71.

This sequence belongs to the prokaryotic ubiquitin-like protein family. As to quaternary structure, strongly interacts with the proteasome-associated ATPase ARC through a hydrophobic interface; the interacting region of Pup lies in its C-terminal half. There is one Pup binding site per ARC hexamer ring.

Its pathway is protein degradation; proteasomal Pup-dependent pathway. Its function is as follows. Protein modifier that is covalently attached to lysine residues of substrate proteins, thereby targeting them for proteasomal degradation. The tagging system is termed pupylation. This Bifidobacterium animalis subsp. lactis (strain AD011) protein is Prokaryotic ubiquitin-like protein Pup.